Reading from the N-terminus, the 345-residue chain is MWLLGPLCLLLSSAAESQLLPGNNFTNECNIPGNFMCSNGRCIPGAWQCDGLPDCFDKSDEKECPKAKSKCGPTFFPCASGIHCIIGRFRCNGFEDCPDGSDEENCTANPLLCSTARYHCKNGLCIDKSFICDGQNNCQDNSDEESCESSQEPGSGQVFVTSENQLVYYPSITYAIIGSSVIFVLVVALLALVLHHQRKRNNLMTLPVHRLQHPVLLSRLVVLDHPHHCNVTYNVNNGIQYVASQAEQNASEVGSPPSYSEALLDQRPAWYDLPPPPYSSDTESLNQADLPPYRSRSGSANSASSQAASSLLSVEDTSHSPGQPGPQEGTAEPRDSEPSQGTEEV.

The signal sequence occupies residues Met1–Ser17. Topologically, residues Gln18–Thr173 are extracellular. Residue Asn24 is glycosylated (N-linked (GlcNAc...) asparagine). 3 consecutive LDL-receptor class A domains span residues Glu28 to Pro65, Lys70 to Thr107, and Leu112 to Glu148. Disulfide bonds link Cys29–Cys42, Cys37–Cys55, Cys49–Cys64, Cys71–Cys84, Cys78–Cys97, Cys91–Cys106, Cys113–Cys125, Cys120–Cys138, and Cys132–Cys147. The (Microbial infection) Interaction with Venezuelan equine encephalitis virus/VEEV spike proteins E1 and E2 stretch occupies residues Asn30–Asp57. A helical transmembrane segment spans residues Tyr174–Leu194. Residues His195–Val345 lie on the Cytoplasmic side of the membrane. 2 short sequence motifs (involved in ITCH interaction) span residues Pro256–Tyr259 and Pro275–Tyr278. The segment at Trp270–Val345 is disordered. A compositionally biased stretch (low complexity) spans Ser295 to Ser313.

The protein belongs to the LDLR family. In terms of assembly, interacts with APP precursor C-terminus. Interacts directly with ITCH; this interaction promotes ITCH auto-ubiquitination leading to its degradation. Interacts directly with NEDD4; this interaction promotes NEDD4 auto-ubiquitination. Interacts directly with NEDD4L. (Microbial infection) Interacts (via domain LDL-receptor class A 1) with Venezuelan equine encephalitis virus/VEEV spike proteins E1 and E2. In terms of tissue distribution, expressed at high levels in brain, lung, skeletal muscle, and pancreas. Expressed at moderate levels in heart, placenta, and kidney but not detected in the liver.

It is found in the cell membrane. May influence APP processing, resulting in a decrease in sAPP-alpha production and increased amyloidogenic P3 peptide production. May regulate ITCH and NEDD4 E3 ligase activity and degradation. In terms of biological role, (Microbial infection) Acts as a receptor for Venezuelan equine encephalitis virus. The polypeptide is Low-density lipoprotein receptor class A domain-containing protein 3 (Homo sapiens (Human)).